The chain runs to 195 residues: MNINPNNVEIIISAVKPDQYPDTGLKEVALAGRSNVGKSSFINTMIGRKSMARISSKPGKTQTLNFFNIDEQLVFVDVPGYGYAKVSKTERERWGKMIETYITTRDNLACVIQLVDIRHNPTEDDRLMYDFLKHYEIPTIVIATKEDKIPKGKIQKHLKIIKQDLDMDSSDTLISYTALSKDKNPMIFNAIEKYL.

Residues 24–195 (GLKEVALAGR…MIFNAIEKYL (172 aa)) form the EngB-type G domain. GTP contacts are provided by residues 32–39 (GRSNVGKS), 59–63 (GKTQT), 77–80 (DVPG), 144–147 (TKED), and 176–178 (YTA). Residues S39 and T61 each contribute to the Mg(2+) site.

The protein belongs to the TRAFAC class TrmE-Era-EngA-EngB-Septin-like GTPase superfamily. EngB GTPase family. Mg(2+) serves as cofactor.

In terms of biological role, necessary for normal cell division and for the maintenance of normal septation. This is Probable GTP-binding protein EngB from Macrococcus caseolyticus (strain JCSC5402) (Macrococcoides caseolyticum).